The sequence spans 504 residues: Glucose-6-phosphate isomerase (504 aa).

Catalysis depends on Glu333, which acts as the Proton donor. Residues His364 and Lys473 contribute to the active site.

This sequence belongs to the GPI family.

The protein resides in the cytoplasm. The catalysed reaction is alpha-D-glucose 6-phosphate = beta-D-fructose 6-phosphate. It functions in the pathway carbohydrate biosynthesis; gluconeogenesis. Its pathway is carbohydrate degradation; glycolysis; D-glyceraldehyde 3-phosphate and glycerone phosphate from D-glucose: step 2/4. Catalyzes the reversible isomerization of glucose-6-phosphate to fructose-6-phosphate. In Xanthomonas oryzae pv. oryzae (strain PXO99A), this protein is Glucose-6-phosphate isomerase.